The sequence spans 94 residues: Small ribosomal subunit protein bS20 (94 aa).

It belongs to the bacterial ribosomal protein bS20 family.

Its function is as follows. Binds directly to 16S ribosomal RNA. The protein is Small ribosomal subunit protein bS20 of Symbiobacterium thermophilum (strain DSM 24528 / JCM 14929 / IAM 14863 / T).